Consider the following 205-residue polypeptide: Small ribosomal subunit protein uS4 (205 aa).

The region spanning 94–157 (SRLDTVVYRM…KQIALIQESI (64 aa)) is the S4 RNA-binding domain.

It belongs to the universal ribosomal protein uS4 family. Part of the 30S ribosomal subunit. Contacts protein S5. The interaction surface between S4 and S5 is involved in control of translational fidelity.

One of the primary rRNA binding proteins, it binds directly to 16S rRNA where it nucleates assembly of the body of the 30S subunit. Its function is as follows. With S5 and S12 plays an important role in translational accuracy. The protein is Small ribosomal subunit protein uS4 of Rickettsia canadensis (strain McKiel).